The chain runs to 314 residues: Fibrinogen-like protein 1 (314 aa).

The signal sequence occupies residues 1–22 (MGEIRSFLLVTIALMMGREIWA). Positions 25–59 (NSKCLLEQERLRAQVQQLETRVKQQQARIAQLMHE) form a coiled coil. One can recognise a Fibrinogen C-terminal domain in the interval 76–308 (LGGKRQYADC…SVVMKIRPND (233 aa)). Disulfide bonds link Cys-85-Cys-114 and Cys-250-Cys-263.

Homodimer. Interacts (via the Fibrinogen C-terminal domain) with LAG3 (via Ig-like domains 1 and 2).

Its subcellular location is the secreted. Its function is as follows. Immune suppressive molecule that inhibits antigen-specific T-cell activation by acting as a major ligand of LAG3. Responsible for LAG3 T-cell inhibitory function. Binds LAG3 independently from MHC class II (MHC-II). Secreted by, and promotes growth of, hepatocytes. This chain is Fibrinogen-like protein 1, found in Mesocricetus auratus (Golden hamster).